Here is a 141-residue protein sequence, read N- to C-terminus: Putative pre-16S rRNA nuclease (141 aa).

The protein belongs to the YqgF nuclease family.

It localises to the cytoplasm. Its function is as follows. Could be a nuclease involved in processing of the 5'-end of pre-16S rRNA. This Pseudomonas putida (strain ATCC 47054 / DSM 6125 / CFBP 8728 / NCIMB 11950 / KT2440) protein is Putative pre-16S rRNA nuclease.